We begin with the raw amino-acid sequence, 866 residues long: Thiamine diphosphate dependent-3-acetyloctanal synthase PigD (866 aa).

The interval 826-866 (KGWQRDPSDREALQERKDWAARQPESTSTSFDQGQNKEAIS) is disordered. Basic and acidic residues predominate over residues 828–845 (WQRDPSDREALQERKDWA). Positions 849-866 (PESTSTSFDQGQNKEAIS) are enriched in polar residues.

The protein belongs to the TPP enzyme family. Requires thiamine diphosphate as cofactor.

It carries out the reaction (2E)-octenal + pyruvate + H(+) = (S)-3-acetyloctanal + CO2. It functions in the pathway antibiotic biosynthesis; prodigiosin biosynthesis. Its function is as follows. Involved in the biosynthesis of 2-methyl-3-n-amyl-pyrrole (MAP), one of the terminal products involved in the biosynthesis of the red antibiotic prodigiosin (Pig). Catalyzes the decarboxylation of pyruvate, followed by the modification of the resulting two-carbon fragment acetaldehyde at the C3 position of the 2-octenal (1,2-addition of acetaldehyde) giving 3-acetyloctanal. The polypeptide is Thiamine diphosphate dependent-3-acetyloctanal synthase PigD (Serratia sp. (strain ATCC 39006) (Prodigiosinella confusarubida)).